A 133-amino-acid chain; its full sequence is Fluoride-specific ion channel FluC 4 (133 aa).

The next 3 helical transmembrane spans lie at 7 to 27 (ILVLVGGFIGGVMRFFLSGYV), 37 to 57 (WGTFVVNVSGAFVIGTAAGLG), and 60 to 80 (LGGIFSTTIFHEFIMVGLLGG). 2 residues coordinate Na(+): G79 and T82. A helical membrane pass occupies residues 107–127 (IVASALLCVLAVAAGYGGIMW).

This sequence belongs to the fluoride channel Fluc/FEX (TC 1.A.43) family.

Its subcellular location is the cell inner membrane. The enzyme catalyses fluoride(in) = fluoride(out). Na(+) is not transported, but it plays an essential structural role and its presence is essential for fluoride channel function. Its function is as follows. Fluoride-specific ion channel. Important for reducing fluoride concentration in the cell, thus reducing its toxicity. In Brucella abortus biovar 1 (strain 9-941), this protein is Fluoride-specific ion channel FluC 4.